A 702-amino-acid chain; its full sequence is Solute carrier organic anion transporter family member 1B3 (702 aa).

Residues 1–28 (MDQHQHLNKTAESASSEKKKTRRCNGFK) are Cytoplasmic-facing. A helical transmembrane segment spans residues 29–48 (MFLAALSFSYIAKALGGIIM). Residues 49 to 67 (KISITQIERRFDISSSLAG) lie on the Extracellular side of the membrane. A helical transmembrane segment spans residues 68 to 88 (LIDGSFEIGNLLVIVFVSYFG). Over 89 to 94 (SKLHRP) the chain is Cytoplasmic. A helical membrane pass occupies residues 95 to 119 (KLIGIGCLLMGTGSILTSLPHFFMG). Residues 120–168 (YYRYSKETHINPSENSTSSLSTCLINQTLSFNGTSPEIVEKDCVKESGS) lie on the Extracellular side of the membrane. N-linked (GlcNAc...) asparagine glycans are attached at residues N134, N145, and N151. A helical transmembrane segment spans residues 169-197 (HMWIYVFMGNMLRGIGETPIVPLGISYID). At 198–216 (DFAKEGHSSLYLGSLNAIG) the chain is on the cytoplasmic side. The chain crosses the membrane as a helical span at residues 217–237 (MIGPVIGFALGSLFAKMYVDI). At 238 to 255 (GYVDLSTIRITPKDSRWV) the chain is on the extracellular side. The helical transmembrane segment at 256 to 280 (GAWWLGFLVSGLFSIISSIPFFFLP) threads the bilayer. The Cytoplasmic segment spans residues 281 to 331 (KNPNKPQKERKISLSLHVLKTNDDRNQTANLTNQGKNVTKNVTGFFQSLKS). S293 and S295 each carry phosphoserine. Residues 332–353 (ILTNPLYVIFLLLTLLQVSSFI) form a helical membrane-spanning segment. Residues 354 to 373 (GSFTYVFKYMEQQYGQSASH) lie on the Extracellular side of the membrane. A helical transmembrane segment spans residues 374–397 (ANFLLGIITIPTVATGMFLGGFII). At 398–401 (KKFK) the chain is on the cytoplasmic side. The helical transmembrane segment at 402-425 (LSLVGIAKFSFLTSMISFLFQLLY) threads the bilayer. Topologically, residues 426–537 (FPLICESKSV…NTCTRKFFIY (112 aa)) are extracellular. An N-linked (GlcNAc...) asparagine glycan is attached at N445. Positions 453–508 (DVPLSYCNSECNCDESQWEPVCGNNGITYLSPCLAGCKSSSGIKKHTVFYNCSCVE) constitute a Kazal-like domain. Disulfide bonds link C459/C489, C465/C485, and C474/C506. N503 and N516 each carry an N-linked (GlcNAc...) asparagine glycan. A helical membrane pass occupies residues 538–560 (VAIQVINSLFSATGGTTFILLTV). Residues 561–569 (KIVQPELKA) are Cytoplasmic-facing. The chain crosses the membrane as a helical span at residues 570–595 (LAMGFQSMVIRTLGGILAPIYFGALI). Topologically, residues 596-629 (DKTCMKWSTNSCGAQGACRIYNSVFFGRVYLGLS) are extracellular. A helical membrane pass occupies residues 630–647 (IALRFPALVLYIVFIFAM). Over 648–695 (KKKFQGKDTKASDNERKVMDEANLEFLNNGEHFVPSAGTDSKTCNLDM) the chain is Cytoplasmic. S683 carries the post-translational modification Phosphoserine.

The protein belongs to the organo anion transporter (TC 2.A.60) family. In terms of processing, N-glycosylated. In terms of tissue distribution, highly expressed in liver, in particular at the basolateral membrane of hepatocytes near the central vein. Expressed in the placenta. In testis, primarily localized to the basal membrane of Sertoli cells and weakly expressed in Leydig cells and within the tubules.

Its subcellular location is the basolateral cell membrane. The protein localises to the basal cell membrane. The catalysed reaction is estrone 3-sulfate(out) + hydrogencarbonate(in) = estrone 3-sulfate(in) + hydrogencarbonate(out). It catalyses the reaction 17beta-estradiol 17-O-(beta-D-glucuronate)(out) = 17beta-estradiol 17-O-(beta-D-glucuronate)(in). The enzyme catalyses taurocholate(out) = taurocholate(in). It carries out the reaction estrone 3-sulfate(out) = estrone 3-sulfate(in). The catalysed reaction is dehydroepiandrosterone 3-sulfate(out) = dehydroepiandrosterone 3-sulfate(in). It catalyses the reaction leukotriene C4(out) = leukotriene C4(in). The enzyme catalyses L-thyroxine(out) = L-thyroxine(in). It carries out the reaction prostaglandin E2(out) = prostaglandin E2(in). The catalysed reaction is (4E,15E)-bilirubin IXalpha C8-beta-D-glucuronoside(out) = (4E,15E)-bilirubin IXalpha C8-beta-D-glucuronoside(in). It catalyses the reaction bilirubin IXalpha bis-beta-D-glucuronoside(out) = bilirubin IXalpha bis-beta-D-glucuronoside(in). Its function is as follows. Mediates the Na(+)-independent uptake of organic anions. Shows broad substrate specificity, can transport both organic anions such as bile acid taurocholate (cholyltaurine) and conjugated steroids (17-beta-glucuronosyl estradiol, dehydroepiandrosterone sulfate (DHEAS), and estrone 3-sulfate), as well as eicosanoid leukotriene C4, prostaglandin E2 and L-thyroxine (T4). Hydrogencarbonate/HCO3(-) acts as the probable counteranion that exchanges for organic anions. Shows a pH-sensitive substrate specificity towards sulfated steroids, taurocholate and T4 which may be ascribed to the protonation state of the binding site and leads to a stimulation of substrate transport in an acidic microenvironment. Involved in the clearance of bile acids and organic anions from the liver. Can take up bilirubin glucuronides from plasma into the liver, contributing to the detoxification-enhancing liver-blood shuttling loop. Transports coproporphyrin I and III, by-products of heme synthesis, and may be involved in their hepatic disposition. May contribute to regulate the transport of organic compounds in testes across the blood-testis-barrier. Can transport HMG-CoA reductase inhibitors (also known as statins) such as pitavastatin, a clinically important class of hypolipidemic drugs. May play an important role in plasma and tissue distribution of the structurally diverse chemotherapeutic drugs methotrexate and paclitaxel. May also transport antihypertension agents, such as the angiotensin-converting enzyme (ACE) inhibitor prodrug enalapril, and the highly selective angiotensin II AT1-receptor antagonist valsartan, in the liver. The chain is Solute carrier organic anion transporter family member 1B3 (SLCO1B3) from Homo sapiens (Human).